The chain runs to 559 residues: DNA ligase (559 aa).

E247 lines the ATP pocket. K249 acts as the N6-AMP-lysine intermediate in catalysis. 6 residues coordinate ATP: R254, R269, E299, F339, R414, and K420.

Belongs to the ATP-dependent DNA ligase family. Mg(2+) serves as cofactor.

The enzyme catalyses ATP + (deoxyribonucleotide)n-3'-hydroxyl + 5'-phospho-(deoxyribonucleotide)m = (deoxyribonucleotide)n+m + AMP + diphosphate.. It carries out the reaction NAD(+) + (deoxyribonucleotide)n-3'-hydroxyl + 5'-phospho-(deoxyribonucleotide)m = (deoxyribonucleotide)n+m + AMP + beta-nicotinamide D-nucleotide.. Functionally, DNA ligase that seals nicks in double-stranded DNA during DNA replication, DNA recombination and DNA repair. Shows high activity with either ATP or NAD(+). In Thermococcus fumicolans, this protein is DNA ligase.